Here is a 183-residue protein sequence, read N- to C-terminus: MKLLSLVAVVGCLLVPPAEANKSSEDIRCKCICPPYRNISGHIYNQNVSQKDCNCLHVVEPMPVPGHDVEAYCLLCECRYEERSTTTIKVIIVIYLSVVGALLLYMAFLMLVDPLIRKPDAYTEQLHNEEENEDARSMAAAAASLGGPRANTVLERVEGAQQRWKLQVQEQRKTVFDRHKMLS.

Residues 1–20 (MKLLSLVAVVGCLLVPPAEA) form the signal peptide. 3 N-linked (GlcNAc...) asparagine glycosylation sites follow: asparagine 21, asparagine 38, and asparagine 47. Residues 21–89 (NKSSEDIRCK…YEERSTTTIK (69 aa)) are Extracellular-facing. Residues 90–110 (VIIVIYLSVVGALLLYMAFLM) form a helical membrane-spanning segment. The Cytoplasmic segment spans residues 111–183 (LVDPLIRKPD…TVFDRHKMLS (73 aa)). A phosphoserine mark is found at serine 137 and serine 144.

Belongs to the TMEM9 family. Interacts with the v-ATPase accessory protein ATP6AP2 and with the v-ATPase complex subunit ATP6V0D1; these interactions lead to the assembly of the v-ATPase complex. Post-translationally, N-glycosylated. In terms of tissue distribution, highly expressed in adrenal gland, thyroid gland, testis, ovary and prostate. Moderate expression in trachea, spinal cord, stomach, colon, small intestine and spleen. Low expression in bone marrow, lymph node, thymus and peripheral blood lymphocytes. Expression is detected in hematopoietic cell lines including those of myeloid, erythroid, B- and T-cell origin.

The protein localises to the lysosome membrane. It localises to the late endosome membrane. Its subcellular location is the endosome. The protein resides in the multivesicular body membrane. In terms of biological role, transmembrane protein that binds to and facilitates the assembly of lysosomal proton-transporting V-type ATPase (v-ATPase), resulting in enhanced lysosomal acidification and trafficking. By bringing the v-ATPase accessory protein ATP6AP2 and the v-ATPase subunit ATP6V0D1 together, allows v-ATPase complex formation and activation. TMEM9-controlled vesicular acidification induces hyperactivation of Wnt/beta-catenin signaling, involved in development, tissue homeostasis and tissue regeneration, through lysosomal degradation of adenomatous polyposis coli/APC. In the liver, involved in hepatic regeneration. This is Proton-transporting V-type ATPase complex assembly regulator TMEM9 from Homo sapiens (Human).